A 572-amino-acid chain; its full sequence is Golgi apyrase (572 aa).

Residues 1–470 (MVRKYGIFID…KHWMRLFPNK (470 aa)) are Lumenal-facing. The Proton acceptor role is filled by Glu145. The helical transmembrane segment at 471–491 (LFFILSFIFCLFFLFSLVLFG) threads the bilayer. Topologically, residues 492–572 (YDPKRRQRFK…RERTPRSPFP (81 aa)) are cytoplasmic.

Belongs to the GDA1/CD39 NTPase family. Ca(2+) is required as a cofactor. It depends on Mg(2+) as a cofactor. Requires Mn(2+) as cofactor.

The protein localises to the golgi apparatus. It localises to the membrane. It carries out the reaction a ribonucleoside 5'-triphosphate + 2 H2O = a ribonucleoside 5'-phosphate + 2 phosphate + 2 H(+). It participates in protein modification; protein glycosylation. In terms of biological role, catalyzes the hydrolysis of phosphoanhydride bonds of nucleoside tri- and di-phosphates. Required for Golgi glycosylation and cell wall integrity. Involved in N-mannosylation of proteins in Golgi. The sequence is that of Golgi apyrase from Schizosaccharomyces pombe (strain 972 / ATCC 24843) (Fission yeast).